Here is a 275-residue protein sequence, read N- to C-terminus: 4-hydroxy-tetrahydrodipicolinate reductase (275 aa).

NAD(+) contacts are provided by residues 13–18 and 108–110; these read GAAGKM and GTT. H164 serves as the catalytic Proton donor/acceptor. H165 lines the (S)-2,3,4,5-tetrahydrodipicolinate pocket. K168 serves as the catalytic Proton donor. Position 174-175 (174-175) interacts with (S)-2,3,4,5-tetrahydrodipicolinate; it reads GT.

Belongs to the DapB family.

The protein resides in the cytoplasm. The enzyme catalyses (S)-2,3,4,5-tetrahydrodipicolinate + NAD(+) + H2O = (2S,4S)-4-hydroxy-2,3,4,5-tetrahydrodipicolinate + NADH + H(+). The catalysed reaction is (S)-2,3,4,5-tetrahydrodipicolinate + NADP(+) + H2O = (2S,4S)-4-hydroxy-2,3,4,5-tetrahydrodipicolinate + NADPH + H(+). It functions in the pathway amino-acid biosynthesis; L-lysine biosynthesis via DAP pathway; (S)-tetrahydrodipicolinate from L-aspartate: step 4/4. In terms of biological role, catalyzes the conversion of 4-hydroxy-tetrahydrodipicolinate (HTPA) to tetrahydrodipicolinate. In Acaryochloris marina (strain MBIC 11017), this protein is 4-hydroxy-tetrahydrodipicolinate reductase.